The following is a 41-amino-acid chain: Large ribosomal subunit protein bL36 (41 aa).

This sequence belongs to the bacterial ribosomal protein bL36 family.

The sequence is that of Large ribosomal subunit protein bL36 from Xylella fastidiosa (strain M23).